Consider the following 108-residue polypeptide: Translation initiation factor 1A (108 aa).

The S1-like domain maps to isoleucine 10 to threonine 84.

It belongs to the eIF-1A family.

Functionally, seems to be required for maximal rate of protein biosynthesis. Enhances ribosome dissociation into subunits and stabilizes the binding of the initiator Met-tRNA(I) to 40 S ribosomal subunits. The sequence is that of Translation initiation factor 1A from Picrophilus torridus (strain ATCC 700027 / DSM 9790 / JCM 10055 / NBRC 100828 / KAW 2/3).